The sequence spans 293 residues: Formamidopyrimidine-DNA glycosylase (293 aa).

Proline 2 functions as the Schiff-base intermediate with DNA in the catalytic mechanism. Glutamate 3 (proton donor) is an active-site residue. The active-site Proton donor; for beta-elimination activity is the lysine 58. Residues histidine 104, arginine 127, and arginine 170 each coordinate DNA. The FPG-type zinc-finger motif lies at 257 to 293 (SVYGREGKPCRNPACGGTVERVVQSGRSTFFCASCQT). Arginine 283 (proton donor; for delta-elimination activity) is an active-site residue.

This sequence belongs to the FPG family. As to quaternary structure, monomer. Requires Zn(2+) as cofactor.

It carries out the reaction Hydrolysis of DNA containing ring-opened 7-methylguanine residues, releasing 2,6-diamino-4-hydroxy-5-(N-methyl)formamidopyrimidine.. The catalysed reaction is 2'-deoxyribonucleotide-(2'-deoxyribose 5'-phosphate)-2'-deoxyribonucleotide-DNA = a 3'-end 2'-deoxyribonucleotide-(2,3-dehydro-2,3-deoxyribose 5'-phosphate)-DNA + a 5'-end 5'-phospho-2'-deoxyribonucleoside-DNA + H(+). Involved in base excision repair of DNA damaged by oxidation or by mutagenic agents. Acts as a DNA glycosylase that recognizes and removes damaged bases. Has a preference for oxidized purines, such as 7,8-dihydro-8-oxoguanine (8-oxoG). Has AP (apurinic/apyrimidinic) lyase activity and introduces nicks in the DNA strand. Cleaves the DNA backbone by beta-delta elimination to generate a single-strand break at the site of the removed base with both 3'- and 5'-phosphates. This Brucella canis (strain ATCC 23365 / NCTC 10854 / RM-666) protein is Formamidopyrimidine-DNA glycosylase.